The sequence spans 860 residues: Anoctamin-7 (860 aa).

Residues 1 to 297 (MLRKQAGEED…YFAWLGFYTG (297 aa)) are Cytoplasmic-facing. The segment at 24 to 50 (NGCSYGSTAQASEAGKQQVAPSRVGSS) is disordered. The helical transmembrane segment at 298–318 (WLLPAAVVGTVVFLAGCFLVF) threads the bilayer. Residues 319–362 (SDVPTQELCHSSDTFDMCPLCSDCSFWLLSSACTLAQAGRLFDH) lie on the Extracellular side of the membrane. Residues 363-383 (GGTVFFSLFMALWAVLLLEYW) traverse the membrane as a helical segment. Over 384-441 (KRKNATLAYRWDCSDYEDIEERPRPQFAATAPMTALNPITGEDEPYFPEKNRVRRMLA) the chain is Cytoplasmic. A helical membrane pass occupies residues 442-462 (GSVVLLMMVAVVIMCLVSIIL). At 463–492 (YRAVMAIIVSKSNNAFLSAWASRIASLTGS) the chain is on the extracellular side. Residues 493-513 (VVNLVFILILSKVYVILAQVL) form a helical membrane-spanning segment. Residues 514–530 (TRWEMHRTQTAFEDAFT) lie on the Cytoplasmic side of the membrane. The helical transmembrane segment at 531-551 (LKVFIFQFVNFYASPVYIAFF) threads the bilayer. At 552–652 (KGRFVGYPGN…FHEYLEMVLQ (101 aa)) the chain is on the extracellular side. Residues 653-673 (FGFVTIFVAACPLAPLFALLN) traverse the membrane as a helical segment. Residues 674–701 (NWVEIRLDARKFVCEYRRPVAERAQDIG) are Cytoplasmic-facing. Residues 702 to 722 (IWFHILAGLTHLAVISNAFLL) traverse the membrane as a helical segment. The Extracellular segment spans residues 723–779 (AFSSDFLPRVYYSWTRAPDLRGFLNFTLARAPPTFTSAHNRTCRYRAFRDDDGHYSP). 2 N-linked (GlcNAc...) asparagine glycosylation sites follow: asparagine 747 and asparagine 762. A helical transmembrane segment spans residues 780 to 800 (TYWTLLAIRLAFVIVFEHVVF). Over 801 to 860 (STGRFLDLLVPDIPESVEIKVKREYYLAKQALADNEALLGATGVKGEQPPSSEPSLGLPA) the chain is Cytoplasmic.

The protein belongs to the anoctamin family.

It localises to the cell membrane. Its subcellular location is the endoplasmic reticulum. It catalyses the reaction a 1,2-diacyl-sn-glycero-3-phospho-L-serine(in) = a 1,2-diacyl-sn-glycero-3-phospho-L-serine(out). The enzyme catalyses a beta-D-galactosyl-(1&lt;-&gt;1')-N-acylsphing-4-enine(out) = a beta-D-galactosyl-(1&lt;-&gt;1')-N-acylsphing-4-enine(in). It carries out the reaction a 1,2-diacyl-sn-glycero-3-phosphocholine(in) = a 1,2-diacyl-sn-glycero-3-phosphocholine(out). Has calcium-dependent phospholipid scramblase activity; scrambles phosphatidylserine, phosphatidylcholine and galactosylceramide. Does not exhibit calcium-activated chloride channel (CaCC) activity. May play a role in cell-cell interactions. The chain is Anoctamin-7 (Ano7) from Rattus norvegicus (Rat).